Here is a 445-residue protein sequence, read N- to C-terminus: Fasciclin-like arabinogalactan protein 16 (445 aa).

The first 23 residues, 1–23 (MDSSYGATKFLLLLFLTTSIATA), serve as a signal peptide directing secretion. 2 FAS1 domains span residues 35 to 173 (NSNS…ERLL) and 257 to 400 (VKDF…DGVL). N-linked (GlcNAc...) asparagine glycosylation is found at Asn-72 and Asn-279.

This sequence belongs to the fasciclin-like AGP family.

It is found in the secreted. In terms of biological role, may be a cell surface adhesion protein. In Arabidopsis thaliana (Mouse-ear cress), this protein is Fasciclin-like arabinogalactan protein 16 (FLA16).